A 1063-amino-acid polypeptide reads, in one-letter code: JmjC domain-containing histone demethylation protein 1 (1063 aa).

Residues 86 to 266 (LYNVLSLEYS…TQLRVYQVEN (181 aa)) enclose the JmjC domain. Thr160 serves as a coordination point for substrate. Residues His163 and Asp165 each coordinate Fe cation. Position 180 (Lys180) interacts with substrate. Residue His234 participates in Fe cation binding. Acidic residues predominate over residues 379-389 (GLEEEAEDEDV). Disordered regions lie at residues 379–400 (GLEEEAEDEDVKPETKKEAEER), 554–750 (ESDE…NPYN), and 776–1040 (VELH…KRAK). The span at 390–400 (KPETKKEAEER) shows a compositional bias: basic and acidic residues. 2 stretches are compositionally biased toward acidic residues: residues 594-605 (PEYDEDMEEYDP) and 613-631 (ELEEEEEEEEGEEEEEEEY). A compositionally biased stretch (low complexity) spans 636–646 (TRRSSTRGSAS). Basic and acidic residues-rich tracts occupy residues 647–665 (TKEEPQEEKEEKEAAPKKE), 674–712 (EKSSKPEKDTTEAKLKKEKKKKEMERRLRDSELEAELRA), 776–806 (VELHIEKNLYKLEPKRDESESREPSMEHEDS), 813–835 (PYDRYSHYHTENSHFQEDQDSHR), and 892–902 (EPRRSNDRRTS). Positions 926 to 937 (AEAASASSSRHS) are enriched in low complexity. Polar residues-rich tracts occupy residues 950–963 (LNSSRHSSTDTPMY) and 973–982 (WLPNTSNVTR). Pro residues predominate over residues 1005–1016 (PPFPRSITPPPV). Residues 1020 to 1030 (ELKSQSNGRKS) are compositionally biased toward polar residues. Residues 1031 to 1040 (NYSEDGKRAK) are compositionally biased toward basic and acidic residues.

It belongs to the JHDM1 histone demethylase family. Fe(2+) is required as a cofactor.

The protein localises to the nucleus. The catalysed reaction is N(6),N(6)-dimethyl-L-lysyl(36)-[histone H3] + 2 2-oxoglutarate + 2 O2 = L-lysyl(36)-[histone H3] + 2 formaldehyde + 2 succinate + 2 CO2. Histone demethylase that specifically demethylates 'Lys-36' of histone H3, thereby playing a central role in histone code. The polypeptide is JmjC domain-containing histone demethylation protein 1 (jhdm-1) (Caenorhabditis briggsae).